We begin with the raw amino-acid sequence, 494 residues long: Alpha-amylase B (494 aa).

The N-terminal stretch at 1–18 is a signal peptide; that stretch reads MFLAKSIVCLALLAVANA. Glutamine 19 is modified (pyrrolidone carboxylic acid). Residues cysteine 46 and cysteine 102 are joined by a disulfide bond. Ca(2+) contacts are provided by asparagine 116, arginine 165, and aspartate 174. Cysteine 153 and cysteine 167 form a disulfide bridge. Arginine 202 contacts chloride. Aspartate 204 functions as the Nucleophile in the catalytic mechanism. Histidine 208 contributes to the Ca(2+) binding site. Glutamate 241 (proton donor) is an active-site residue. 2 residues coordinate chloride: asparagine 304 and arginine 343. 2 disulfide bridges follow: cysteine 376–cysteine 382 and cysteine 448–cysteine 460.

Belongs to the glycosyl hydrolase 13 family. As to quaternary structure, monomer. Ca(2+) serves as cofactor. Requires chloride as cofactor.

The catalysed reaction is Endohydrolysis of (1-&gt;4)-alpha-D-glucosidic linkages in polysaccharides containing three or more (1-&gt;4)-alpha-linked D-glucose units.. The protein is Alpha-amylase B (Amy-d) of Drosophila yakuba (Fruit fly).